A 325-amino-acid chain; its full sequence is NADH-quinone oxidoreductase subunit H (325 aa).

The next 9 helical transmembrane spans lie at 11–31 (ILLSILKAVVILLVVVTCGAF), 50–69 (NRVGWGGSLQLVADMIKMFF), 81–101 (VIFTLAPMIAFTSLLLSFAIV), 114–134 (IGILFFLMMAGLAVYAVLFAG), 154–174 (VSYEVFLGLSLMGVVAQAGSF), 186–206 (LWNVIPQFFGFVTFAIAGVAV), 237–257 (FFVGEYIGIVTVSALMVTLFF), 265–285 (LPPFVWFALKTAFFMMMFILI), and 304–324 (VCLPLTLINLLVTAAVILWQA).

Belongs to the complex I subunit 1 family. NDH-1 is composed of 13 different subunits. Subunits NuoA, H, J, K, L, M, N constitute the membrane sector of the complex.

It is found in the cell inner membrane. The enzyme catalyses a quinone + NADH + 5 H(+)(in) = a quinol + NAD(+) + 4 H(+)(out). NDH-1 shuttles electrons from NADH, via FMN and iron-sulfur (Fe-S) centers, to quinones in the respiratory chain. The immediate electron acceptor for the enzyme in this species is believed to be ubiquinone. Couples the redox reaction to proton translocation (for every two electrons transferred, four hydrogen ions are translocated across the cytoplasmic membrane), and thus conserves the redox energy in a proton gradient. This subunit may bind ubiquinone. This chain is NADH-quinone oxidoreductase subunit H, found in Salmonella arizonae (strain ATCC BAA-731 / CDC346-86 / RSK2980).